Consider the following 26-residue polypeptide: Protein YsdD (26 aa).

The disordered stretch occupies residues Met-1–Val-26.

The polypeptide is Protein YsdD (Escherichia coli (strain K12)).